Consider the following 296-residue polypeptide: Phosphoribosylaminoimidazole-succinocarboxamide synthase (296 aa).

This sequence belongs to the SAICAR synthetase family.

It catalyses the reaction 5-amino-1-(5-phospho-D-ribosyl)imidazole-4-carboxylate + L-aspartate + ATP = (2S)-2-[5-amino-1-(5-phospho-beta-D-ribosyl)imidazole-4-carboxamido]succinate + ADP + phosphate + 2 H(+). The protein operates within purine metabolism; IMP biosynthesis via de novo pathway; 5-amino-1-(5-phospho-D-ribosyl)imidazole-4-carboxamide from 5-amino-1-(5-phospho-D-ribosyl)imidazole-4-carboxylate: step 1/2. The chain is Phosphoribosylaminoimidazole-succinocarboxamide synthase from Syntrophotalea carbinolica (strain DSM 2380 / NBRC 103641 / GraBd1) (Pelobacter carbinolicus).